The following is a 445-amino-acid chain: Acyl-CoA Delta-4 desaturase (445 aa).

The Cytochrome b5 heme-binding domain maps to 19–96 (AGVYTWEEVQ…MKPLLVGELA (78 aa)). Transmembrane regions (helical) follow at residues 132 to 152 (LFFL…LLMV), 153 to 173 (WHWG…ATAQ), 266 to 286 (YFFL…NIMM), and 307 to 327 (YMLC…MMFA).

The protein belongs to the fatty acid desaturase type 1 family.

The protein localises to the membrane. The catalysed reaction is (8Z,11Z,14Z,17Z)-eicosatetraenoyl-CoA + 2 Fe(II)-[cytochrome b5] + O2 + 2 H(+) = (5Z,8Z,11Z,14Z,17Z)-eicosapentaenoyl-CoA + 2 Fe(III)-[cytochrome b5] + 2 H2O. It carries out the reaction (7Z,10Z,13Z,16Z)-docosatetraenoyl-CoA + 2 Fe(II)-[cytochrome b5] + O2 + 2 H(+) = (4Z,7Z,10Z,13Z,16Z)-docosapentaenoyl-CoA + 2 Fe(III)-[cytochrome b5] + 2 H2O. The enzyme catalyses (7Z,10Z,13Z,16Z,19Z)-docosapentaenoyl-CoA + 2 Fe(II)-[cytochrome b5] + O2 + 2 H(+) = (4Z,7Z,10Z,13Z,16Z,19Z)-docosahexaenoyl-CoA + 2 Fe(III)-[cytochrome b5] + 2 H2O. The protein operates within lipid metabolism; polyunsaturated fatty acid biosynthesis. In terms of biological role, fatty acid desaturase with bifunctional delta-4 and delta-5 activities. Component of a lipid metabolic pathway that catalyzes the biosynthesis of polyunsaturated fatty acids (PUFA) with preference toward n-3 substrates and Delta(4)function. The chain is Acyl-CoA Delta-4 desaturase from Siganus canaliculatus (White-spotted spinefoot).